A 158-amino-acid chain; its full sequence is NKG2-F type II integral membrane protein (158 aa).

Polar residues predominate over residues 1–12 (MNKQRGTYSEVS). Positions 1–30 (MNKQRGTYSEVSLAQDPKRQQRKLKGNKSS) are disordered. Over 1 to 74 (MNKQRGTYSE…LPPPERLTAE (74 aa)) the chain is Cytoplasmic. Residues 75–95 (VLGIICIVLMATVLKTIVLIP) traverse the membrane as a helical segment. Residues 96-158 (CIGVLEQNNF…VLQRTLICFL (63 aa)) lie on the Extracellular side of the membrane.

As to quaternary structure, can form disulfide-bonded heterodimer with CD94. Natural killer cells.

The protein localises to the membrane. Its function is as follows. May play a role as a receptor for the recognition of MHC class I HLA-E molecules by NK cells. In Pan troglodytes (Chimpanzee), this protein is NKG2-F type II integral membrane protein (KLRC4).